Here is a 181-residue protein sequence, read N- to C-terminus: Oligoribonuclease (181 aa).

In terms of domain architecture, Exonuclease spans 8–171 (LIWIDLEMTG…DDIRESVGEL (164 aa)). Tyrosine 129 is an active-site residue.

The protein belongs to the oligoribonuclease family.

The protein localises to the cytoplasm. In terms of biological role, 3'-to-5' exoribonuclease specific for small oligoribonucleotides. This chain is Oligoribonuclease, found in Serratia proteamaculans (strain 568).